The primary structure comprises 288 residues: Acetyl-coenzyme A carboxylase carboxyl transferase subunit beta (288 aa).

One can recognise a CoA carboxyltransferase N-terminal domain in the interval 32-288 (LLLICPKCKK…ILMLHNVEAR (257 aa)). Zn(2+)-binding residues include cysteine 36, cysteine 39, cysteine 55, and cysteine 58. The C4-type zinc-finger motif lies at 36–58 (CPKCKKTLLKSELADNLDVCREC).

Belongs to the AccD/PCCB family. Acetyl-CoA carboxylase is a heterohexamer composed of biotin carboxyl carrier protein (AccB), biotin carboxylase (AccC) and two subunits each of ACCase subunit alpha (AccA) and ACCase subunit beta (AccD). Zn(2+) serves as cofactor.

Its subcellular location is the cytoplasm. It catalyses the reaction N(6)-carboxybiotinyl-L-lysyl-[protein] + acetyl-CoA = N(6)-biotinyl-L-lysyl-[protein] + malonyl-CoA. It participates in lipid metabolism; malonyl-CoA biosynthesis; malonyl-CoA from acetyl-CoA: step 1/1. Functionally, component of the acetyl coenzyme A carboxylase (ACC) complex. Biotin carboxylase (BC) catalyzes the carboxylation of biotin on its carrier protein (BCCP) and then the CO(2) group is transferred by the transcarboxylase to acetyl-CoA to form malonyl-CoA. The chain is Acetyl-coenzyme A carboxylase carboxyl transferase subunit beta from Ruminiclostridium cellulolyticum (strain ATCC 35319 / DSM 5812 / JCM 6584 / H10) (Clostridium cellulolyticum).